Here is a 181-residue protein sequence, read N- to C-terminus: Putative NAD(P)H-dependent FMN-containing oxidoreductase YwqN (181 aa).

It belongs to the SsuE family. It depends on FMN as a cofactor.

Its function is as follows. Putative NADPH-dependent oxidoreductase. The chain is Putative NAD(P)H-dependent FMN-containing oxidoreductase YwqN (ywqN) from Bacillus subtilis (strain 168).